Here is a 388-residue protein sequence, read N- to C-terminus: Succinate--CoA ligase [ADP-forming] subunit beta (388 aa).

The region spanning 9–244 (KQLFKEYGLP…PSQEDAREAH (236 aa)) is the ATP-grasp domain. Residues lysine 46, 53–55 (GRG), glutamate 99, threonine 102, and glutamate 107 each bind ATP. Positions 199 and 213 each coordinate Mg(2+). Residues asparagine 264 and 321–323 (GIV) each bind substrate.

The protein belongs to the succinate/malate CoA ligase beta subunit family. As to quaternary structure, heterotetramer of two alpha and two beta subunits. Mg(2+) serves as cofactor.

The enzyme catalyses succinate + ATP + CoA = succinyl-CoA + ADP + phosphate. It catalyses the reaction GTP + succinate + CoA = succinyl-CoA + GDP + phosphate. The protein operates within carbohydrate metabolism; tricarboxylic acid cycle; succinate from succinyl-CoA (ligase route): step 1/1. Functionally, succinyl-CoA synthetase functions in the citric acid cycle (TCA), coupling the hydrolysis of succinyl-CoA to the synthesis of either ATP or GTP and thus represents the only step of substrate-level phosphorylation in the TCA. The beta subunit provides nucleotide specificity of the enzyme and binds the substrate succinate, while the binding sites for coenzyme A and phosphate are found in the alpha subunit. The sequence is that of Succinate--CoA ligase [ADP-forming] subunit beta from Alteromonas mediterranea (strain DSM 17117 / CIP 110805 / LMG 28347 / Deep ecotype).